We begin with the raw amino-acid sequence, 102 residues long: Bowman-Birk type wound-induced proteinase inhibitor WIP1 (102 aa).

An N-terminal signal peptide occupies residues 1–15 (MKSSPHLVLILCLQA). 5 cysteine pairs are disulfide-bonded: C46–C102, C47–C60, C50–C98, C67–C74, and C71–C90.

The protein belongs to the Bowman-Birk serine protease inhibitor family.

The chain is Bowman-Birk type wound-induced proteinase inhibitor WIP1 (WIP1) from Zea mays (Maize).